We begin with the raw amino-acid sequence, 140 residues long: Profilin-1 (140 aa).

Residue Ala2 is modified to N-acetylalanine. Phosphoserine is present on Ser28. A Glycyl lysine isopeptide (Lys-Gly) (interchain with G-Cter in SUMO2); alternate cross-link involves residue Lys54. Lys54 is covalently cross-linked (Glycyl lysine isopeptide (Lys-Gly) (interchain with G-Cter in ubiquitin); alternate). Ser57 bears the Phosphoserine mark. N6-acetyllysine is present on Lys108. Tyr129 is modified (phosphotyrosine). Ser138 is modified (phosphoserine; by ROCK1).

It belongs to the profilin family. As to quaternary structure, found in a complex with XPO6, Ran, ACTB and PFN1. Interacts with ACTB. Interacts with VASP. Interacts with HTT. Interacts with SH3BGRL. Occurs in many kinds of cells as a complex with monomeric actin in a 1:1 ratio. Interacts with ACTMAP. Phosphorylation at Ser-138 reduces its affinity for G-actin and blocks its interaction with HTT, reducing its ability to inhibit androgen receptor (AR) and HTT aggregation.

The protein resides in the cytoplasm. The protein localises to the cytoskeleton. Binds to actin and affects the structure of the cytoskeleton. At high concentrations, profilin prevents the polymerization of actin, whereas it enhances it at low concentrations. By binding to PIP2, it inhibits the formation of IP3 and DG. Inhibits androgen receptor (AR) and HTT aggregation and binding of G-actin is essential for its inhibition of AR. In Bos taurus (Bovine), this protein is Profilin-1 (PFN1).